The following is a 252-amino-acid chain: Orotidine 5'-phosphate decarboxylase (252 aa).

Residues Asp-26, Lys-48, 75–84 (DLKFHDIPNT), Thr-135, Arg-196, Gln-205, Gly-225, and Arg-226 contribute to the substrate site. The Proton donor role is filled by Lys-77.

Belongs to the OMP decarboxylase family. Type 1 subfamily. As to quaternary structure, homodimer.

The enzyme catalyses orotidine 5'-phosphate + H(+) = UMP + CO2. Its pathway is pyrimidine metabolism; UMP biosynthesis via de novo pathway; UMP from orotate: step 2/2. Catalyzes the decarboxylation of orotidine 5'-monophosphate (OMP) to uridine 5'-monophosphate (UMP). The sequence is that of Orotidine 5'-phosphate decarboxylase from Sodalis glossinidius (strain morsitans).